The sequence spans 70 residues: Small ribosomal subunit protein bS21A (70 aa).

It belongs to the bacterial ribosomal protein bS21 family.

In Burkholderia mallei (strain ATCC 23344), this protein is Small ribosomal subunit protein bS21A (rpsU1).